The following is a 115-amino-acid chain: Promotilin (115 aa).

A signal peptide spans 1–25 (MLSRKATAVLLAVHAAAMLASQTEA). Residues 43 to 72 (RYKGQKKSLSVQQRSEEVGPVDPTEPWEEK) are disordered.

Belongs to the motilin family.

It is found in the secreted. Its function is as follows. Plays an important role in the regulation of interdigestive gastrointestinal motility and indirectly causes rhythmic contraction of duodenal and colonic smooth muscle. The polypeptide is Promotilin (MLN) (Bos taurus (Bovine)).